A 143-amino-acid polypeptide reads, in one-letter code: UPF0201 protein Msed_1787 (143 aa).

This sequence belongs to the UPF0201 family.

In Metallosphaera sedula (strain ATCC 51363 / DSM 5348 / JCM 9185 / NBRC 15509 / TH2), this protein is UPF0201 protein Msed_1787.